The primary structure comprises 745 residues: Pentatricopeptide repeat-containing protein At1g71420 (745 aa).

13 PPR repeats span residues 58–88, 95–125, 126–160, 191–224, 225–259, 260–296, 301–332, 334–367, 368–402, 403–437, 438–464, 466–496, and 502–532; these read SQQA…MLSH, NVIL…MPER, NVVS…CFPN, SIYV…IKFK, NLVT…GVGF, DRAT…TVKS, QTEV…MSHC, DIVA…KLSP, DWYT…GFLA, DTVL…DVVS, WNSM…MDIN, DSAT…MFEK, and QLNH…MPMD. Residues 537-613 are type E motif; it reads VWIALLGSCR…EPDLSWTEIG (77 aa). The segment at 614–644 is type E(+) motif; sequence NKVHEFASGGRHRPDKEAVYRELKRLISWLK. The type DYW motif stretch occupies residues 645-745; that stretch reads EMGYVPEMRS…DSSCSCNDYW (101 aa).

This sequence belongs to the PPR family. PCMP-H subfamily.

This is Pentatricopeptide repeat-containing protein At1g71420 (PCMP-H70) from Arabidopsis thaliana (Mouse-ear cress).